We begin with the raw amino-acid sequence, 310 residues long: Protein-L-isoaspartate O-methyltransferase (310 aa).

Residues 1-41 form a disordered region; the sequence is MSGERAKRFPLALEDLKRAPRKSEGRPGERQTAGAVPKAAD. Basic and acidic residues predominate over residues 14–29; the sequence is EDLKRAPRKSEGRPGE. S157 is an active-site residue.

The protein belongs to the methyltransferase superfamily. L-isoaspartyl/D-aspartyl protein methyltransferase family.

The protein resides in the cytoplasm. The enzyme catalyses [protein]-L-isoaspartate + S-adenosyl-L-methionine = [protein]-L-isoaspartate alpha-methyl ester + S-adenosyl-L-homocysteine. Functionally, catalyzes the methyl esterification of L-isoaspartyl residues in peptides and proteins that result from spontaneous decomposition of normal L-aspartyl and L-asparaginyl residues. It plays a role in the repair and/or degradation of damaged proteins. This is Protein-L-isoaspartate O-methyltransferase from Burkholderia cenocepacia (strain HI2424).